The chain runs to 351 residues: Palmitoyltransferase spe-10 (351 aa).

The next 4 membrane-spanning stretches (helical) occupy residues 21 to 43, 60 to 80, 198 to 218, and 241 to 261; these read TGWILTRCLNVLLFIQLILLWWS, IQATIYLIVGSFLFVMSMWSL, YFLLYIIYTSFLVYWYLLTSL, and LFSFIVGGVFGYYPLGELIIF. One can recognise a DHHC domain in the interval 154 to 204; the sequence is KYCYECGHIKPDRARHCSSCGKCCIKYDHHCPWINMCVTHVNYKYFLLYII.

The protein belongs to the DHHC palmitoyltransferase family. As to expression, expressed during spermatogenesis in budding and budded spermatids.

Its subcellular location is the membrane. The enzyme catalyses L-cysteinyl-[protein] + hexadecanoyl-CoA = S-hexadecanoyl-L-cysteinyl-[protein] + CoA. Its function is as follows. Involved in spermatogenesis, specifically in the morphogenesis of fibrous body-membranous organelles (FB-MO), which are Golgi-derived organelles used for transporting sperm-specific components, in spermatocytes and in their localization into budding spermatids. Required for the proper formation of spermatids and spermatozoa. This Caenorhabditis elegans protein is Palmitoyltransferase spe-10.